Reading from the N-terminus, the 107-residue chain is Protein Rev (107 aa).

2 positions are modified to phosphoserine; by host CK2: S5 and S8. The tract at residues 18 to 26 (IIKILYQSN) is homomultimerization. Disordered stretches follow at residues 26-48 (NPYP…WRAR) and 81-107 (LNLD…VGNP). The short motif at 34–50 (TRQARRNRRRRWRARQR) is the Nuclear localization signal and RNA-binding (RRE) element. Residues 36-48 (QARRNRRRRWRAR) are compositionally biased toward basic residues. A Nuclear export signal and binding to XPO1 motif is present at residues 73–84 (LQLPPLERLNLD). Low complexity predominate over residues 89–101 (SGTSGTQQSQGTT). The residue at position 92 (S92) is a Phosphoserine; by host.

It belongs to the HIV-1 REV protein family. Homomultimer; when bound to the RRE. Multimeric assembly is essential for activity and may involve XPO1. Binds to human KPNB1, XPO1, TNPO1, RANBP5 and IPO7. Interacts with the viral Integrase. Interacts with human KHDRBS1. Interacts with human NAP1; this interaction decreases Rev multimerization and stimulates its activity. Interacts with human DEAD-box helicases DDX3 and DDX24; these interactions may serve for viral RNA export to the cytoplasm and packaging, respectively. Interacts with human PSIP1; this interaction may inhibit HIV-1 DNA integration by promoting dissociation of the Integrase-LEDGF/p75 complex. Post-translationally, asymmetrically arginine dimethylated at one site by host PRMT6. Methylation impairs the RNA-binding activity and export of viral RNA from the nucleus to the cytoplasm. In terms of processing, phosphorylated by protein kinase CK2. Presence of, and maybe binding to the N-terminus of the regulatory beta subunit of CK2 is necessary for CK2-mediated Rev's phosphorylation.

Its subcellular location is the host nucleus. It is found in the host nucleolus. It localises to the host cytoplasm. In terms of biological role, escorts unspliced or incompletely spliced viral pre-mRNAs (late transcripts) out of the nucleus of infected cells. These pre-mRNAs carry a recognition sequence called Rev responsive element (RRE) located in the env gene, that is not present in fully spliced viral mRNAs (early transcripts). This function is essential since most viral proteins are translated from unspliced or partially spliced pre-mRNAs which cannot exit the nucleus by the pathway used by fully processed cellular mRNAs. Rev itself is translated from a fully spliced mRNA that readily exits the nucleus. Rev's nuclear localization signal (NLS) binds directly to KPNB1/Importin beta-1 without previous binding to KPNA1/Importin alpha-1. KPNB1 binds to the GDP bound form of RAN (Ran-GDP) and targets Rev to the nucleus. In the nucleus, the conversion from Ran-GDP to Ran-GTP dissociates Rev from KPNB1 and allows Rev's binding to the RRE in viral pre-mRNAs. Rev multimerization on the RRE via cooperative assembly exposes its nuclear export signal (NES) to the surface. Rev can then form a complex with XPO1/CRM1 and Ran-GTP, leading to nuclear export of the complex. Conversion from Ran-GTP to Ran-GDP mediates dissociation of the Rev/RRE/XPO1/RAN complex, so that Rev can return to the nucleus for a subsequent round of export. Beside KPNB1, also seems to interact with TNPO1/Transportin-1, RANBP5/IPO5 and IPO7/RANBP7 for nuclear import. The nucleoporin-like HRB/RIP is an essential cofactor that probably indirectly interacts with Rev to release HIV RNAs from the perinuclear region to the cytoplasm. The chain is Protein Rev from Homo sapiens (Human).